Consider the following 183-residue polypeptide: Porphobilinogen deaminase (183 aa).

It belongs to the HMBS family. As to quaternary structure, monomer. The cofactor is dipyrromethane.

The catalysed reaction is 4 porphobilinogen + H2O = hydroxymethylbilane + 4 NH4(+). Its pathway is porphyrin-containing compound metabolism; protoporphyrin-IX biosynthesis; coproporphyrinogen-III from 5-aminolevulinate: step 2/4. In terms of biological role, tetrapolymerization of the monopyrrole PBG into the hydroxymethylbilane pre-uroporphyrinogen in several discrete steps. The sequence is that of Porphobilinogen deaminase (hemC) from Yersinia intermedia.